A 532-amino-acid chain; its full sequence is Pre-rRNA-processing protein pro-1 (532 aa).

WD repeat units follow at residues 136–175 and 287–326; these read AHYQ…SADR and GHSD…CLKV. The disordered stretch occupies residues 435-464; that stretch reads TLGDDEDDAPEVGNQRRQNKKNNKKNRKLQ. The stretch at 445–526 forms a coiled coil; that stretch reads EVGNQRRQNK…INRQMYEFVA (82 aa). Positions 451-464 are enriched in basic residues; it reads RQNKKNNKKNRKLQ.

Belongs to the WD repeat IPI3/WDR18 family. In terms of assembly, component of the PELP1 complex, composed of at least PELP1, TEX10 and WDR18. The complex interacts with pre-60S ribosome particles.

The protein localises to the nucleus. It is found in the nucleolus. Its subcellular location is the nucleoplasm. Component of the PELP1 complex involved in the nucleolar steps of 28S rRNA maturation and the subsequent nucleoplasmic transit of the pre-60S ribosomal subunit. Required for processing ITS2 sequences from rRNA intermediates during 26S rRNA maturation. Required in the soma to promote normal proliferation and prevent germline tumor formation. This is Pre-rRNA-processing protein pro-1 (pro-1) from Caenorhabditis briggsae.